We begin with the raw amino-acid sequence, 71 residues long: Equinin B (71 aa).

The signal sequence occupies residues 1-11 (MAVIMVDQAEG). The propeptide occupies 46–71 (GDEPQQMALDDESDPLVILPNNYNDY).

Post-translationally, contains 4 disulfide bonds.

The protein resides in the secreted. Its subcellular location is the target cell membrane. Functionally, antimicrobial peptide with inhibitory activity against both Gram-positive and Gram-negative bacteria (E.coli (MIC=0.25 ug/ml), M.lysodeikticus (MIC=0.25 ug/ml), and V.alginolyticus (MIC=0.25 ug/ml)). Does not show hemolytic activity. The chain is Equinin B from Actinia equina (Beadlet anemone).